The following is a 143-amino-acid chain: Large ribosomal subunit protein uL16 (143 aa).

It belongs to the universal ribosomal protein uL16 family. In terms of assembly, part of the 50S ribosomal subunit.

Its function is as follows. Binds 23S rRNA and is also seen to make contacts with the A and possibly P site tRNAs. This is Large ribosomal subunit protein uL16 from Tropheryma whipplei (strain TW08/27) (Whipple's bacillus).